A 200-amino-acid chain; its full sequence is Large ribosomal subunit protein uL29 (200 aa).

A large ribosomal subunit protein uL29 region spans residues 1-107 (MTIAKELKQK…KQETKKAEVK (107 aa)). Residues 92–200 (STKPESKQET…KMIKTKEKKQ (109 aa)) form a disordered region. Positions 93 to 179 (TKPESKQETK…QEVKKVEAKK (87 aa)) are enriched in basic and acidic residues. Positions 108-200 (PKVESKPESK…KMIKTKEKKQ (93 aa)) are unknown. Residues 186 to 200 (KPVKAKMIKTKEKKQ) are compositionally biased toward basic residues.

Belongs to the universal ribosomal protein uL29 family.

The polypeptide is Large ribosomal subunit protein uL29 (Mycoplasma genitalium (strain ATCC 33530 / DSM 19775 / NCTC 10195 / G37) (Mycoplasmoides genitalium)).